We begin with the raw amino-acid sequence, 314 residues long: Malate dehydrogenase (314 aa).

9–15 (IGVGNVG) contacts NAD(+). Positions 84 and 90 each coordinate substrate. NAD(+) is bound by residues asparagine 97 and 120-122 (ISN). Positions 122 and 153 each coordinate substrate. The Proton acceptor role is filled by histidine 177.

This sequence belongs to the LDH/MDH superfamily.

The catalysed reaction is (S)-malate + NAD(+) = oxaloacetate + NADH + H(+). Its function is as follows. Catalyzes the reversible oxidation of malate to oxaloacetate. In Aliarcobacter butzleri (strain RM4018) (Arcobacter butzleri), this protein is Malate dehydrogenase.